Reading from the N-terminus, the 477-residue chain is Proton extrusion protein PxcA (477 aa).

A run of 3 helical transmembrane segments spans residues 239–259 (FILL…ITFV), 354–374 (GIKN…IIST), and 437–457 (FNFL…KYWI).

The protein belongs to the CemA family.

It is found in the cell inner membrane. Required for H(+) efflux immediately after light irradiation to form a rapid H(+) concentration gradient across the thylakoid membranes. Together with PxcL, contributes to transient H(+) uptake following dark to light transition. In Trichodesmium erythraeum (strain IMS101), this protein is Proton extrusion protein PxcA.